The chain runs to 523 residues: DELLA protein RGL3 (523 aa).

Residues 1-28 form a disordered region; sequence MKRSHQETSVEEEAPSMVEKLENGCGGG. A DELLA motif motif is present at residues 34–38; sequence DEFLA. The LEXLE motif motif lies at 56-60; sequence LEQLE. The VHYNP motif motif lies at 78-82; sequence VHYNP. A GRAS domain is found at 148 to 516; the sequence is VLIEETGVRL…KPLIAASAWK (369 aa). Residues 155-209 form a leucine repeat I (LRI) region; sequence VRLVQALVACAEAVQLENLSLADALVKRVGLLAASQAGAMGKVATYFAEALARRI. A VHIID region spans residues 228–293; sequence QMNFYDSCPY…GGPPSFRLTG (66 aa). The short motif at 259–263 is the VHIID element; the sequence is VHVID. The tract at residues 305-337 is leucine repeat II (LRII); it reads ELGWKLAQLAQAIGVEFKFNGLTTERLSDLEPD. A PFYRE region spans residues 348–437; sequence LVVNSVFELH…EVYLGRQILN (90 aa). The short motif at 356-360 is the LXXLL motif element; the sequence is LHPVL. The segment at 440–516 is SAW; that stretch reads ATEGSDRIER…KPLIAASAWK (77 aa).

Belongs to the GRAS family. DELLA subfamily. As to quaternary structure, interacts directly with the GID2/SLY1 component of the SCF(GID2) complex, suggesting that it may be ubiquitinated. Interacts (via N-terminus) with GID1A, GID1B and GID1B (via N-terminus). Interacts with the BOI proteins BOI, BRG1, BRG2 and BRG3. Post-translationally, phosphorylated. In terms of processing, may be ubiquitinated. Expressed at very low level. Mainly expressed in germinating seeds and flowers and siliques. Not expressed in other tissues.

It localises to the nucleus. In terms of biological role, probable transcriptional regulator that acts as a repressor of the gibberellin (GA) signaling pathway. No effect of the BOI proteins on its stability. Probably acts by participating in large multiprotein complexes that repress transcription of GA-inducible genes. Its activity may be regulated by phytohormones such as auxin and ethylene. In Arabidopsis thaliana (Mouse-ear cress), this protein is DELLA protein RGL3 (RGL3).